The following is a 378-amino-acid chain: Dof zinc finger protein 1 (378 aa).

A compositionally biased stretch (low complexity) spans 28 to 38 (GANPNPAATAP). The segment at 28 to 79 (GANPNPAATAPSSVTGGALRGGGGGGAPPVAGGAGAGSTERRARPQKEKALN) is disordered. Over residues 45 to 63 (ALRGGGGGGAPPVAGGAGA) the composition is skewed to gly residues. Residues 66–77 (TERRARPQKEKA) are compositionally biased toward basic and acidic residues. The segment at 78-132 (LNCPRCNSTNTKFCYYNNYSLQQPRYFCKTCRRYWTEGGSLRNVPVGGGSRKNKR) adopts a Dof-type zinc-finger fold. Zn(2+) is bound by residues cysteine 80, cysteine 83, cysteine 105, and cysteine 108. Disordered stretches follow at residues 116 to 148 (GSLR…ASTA), 203 to 222 (SLES…NGRG), and 316 to 378 (LKPT…GTSW). Low complexity predominate over residues 133–148 (SSSSAASASPASASTA). Composition is skewed to gly residues over residues 323–338 (GTGG…GVDG), 350–361 (AGGGGGGPGGHD), and 369–378 (MIGGGSGTSW).

It is found in the nucleus. Functionally, transcription factor that may transactivate seed storage protein genes in developing seeds. This Oryza sativa subsp. japonica (Rice) protein is Dof zinc finger protein 1.